A 323-amino-acid chain; its full sequence is 4-hydroxy-3-methylbut-2-enyl diphosphate reductase (323 aa).

Residue Cys12 participates in [4Fe-4S] cluster binding. The (2E)-4-hydroxy-3-methylbut-2-enyl diphosphate site is built by His43 and His81. Dimethylallyl diphosphate-binding residues include His43 and His81. Isopentenyl diphosphate is bound by residues His43 and His81. Residue Cys103 coordinates [4Fe-4S] cluster. Residue His131 participates in (2E)-4-hydroxy-3-methylbut-2-enyl diphosphate binding. A dimethylallyl diphosphate-binding site is contributed by His131. Position 131 (His131) interacts with isopentenyl diphosphate. Catalysis depends on Glu133, which acts as the Proton donor. Thr170 contributes to the (2E)-4-hydroxy-3-methylbut-2-enyl diphosphate binding site. Cys198 lines the [4Fe-4S] cluster pocket. Ser226, Asn228, and Ser271 together coordinate (2E)-4-hydroxy-3-methylbut-2-enyl diphosphate. Dimethylallyl diphosphate is bound by residues Ser226, Asn228, and Ser271. Ser226, Asn228, and Ser271 together coordinate isopentenyl diphosphate.

This sequence belongs to the IspH family. It depends on [4Fe-4S] cluster as a cofactor.

It catalyses the reaction isopentenyl diphosphate + 2 oxidized [2Fe-2S]-[ferredoxin] + H2O = (2E)-4-hydroxy-3-methylbut-2-enyl diphosphate + 2 reduced [2Fe-2S]-[ferredoxin] + 2 H(+). The enzyme catalyses dimethylallyl diphosphate + 2 oxidized [2Fe-2S]-[ferredoxin] + H2O = (2E)-4-hydroxy-3-methylbut-2-enyl diphosphate + 2 reduced [2Fe-2S]-[ferredoxin] + 2 H(+). The protein operates within isoprenoid biosynthesis; dimethylallyl diphosphate biosynthesis; dimethylallyl diphosphate from (2E)-4-hydroxy-3-methylbutenyl diphosphate: step 1/1. Its pathway is isoprenoid biosynthesis; isopentenyl diphosphate biosynthesis via DXP pathway; isopentenyl diphosphate from 1-deoxy-D-xylulose 5-phosphate: step 6/6. Functionally, catalyzes the conversion of 1-hydroxy-2-methyl-2-(E)-butenyl 4-diphosphate (HMBPP) into a mixture of isopentenyl diphosphate (IPP) and dimethylallyl diphosphate (DMAPP). Acts in the terminal step of the DOXP/MEP pathway for isoprenoid precursor biosynthesis. The protein is 4-hydroxy-3-methylbut-2-enyl diphosphate reductase of Lysinibacillus sphaericus (strain C3-41).